We begin with the raw amino-acid sequence, 270 residues long: MAVGKNKGLSKGGKKGVKKKIVDPFTRKDWYDVKAPTMYTVRNIGKTFVNRTQGTKIASEGLKGRVFEVSQADLTNGEDAYRKFRLIAEEVQGRNVLTNFHGMDLTTDKLRSMVKKWQTLIEATVDVRTTDGYLLRMFCIGFTKKCANQLKKTCYAQHNQVRLIRKKMTEMMVVEVSSSNLKDVVNKLIPGSIGKDIEKSCQHIYPLHDVLIRKVKVLKKPKFELGKLLELHGEGTSKGGAASTAAVAKGEEGVKVDRPEGYEPPVLETV.

The disordered stretch occupies residues 235–270 (GTSKGGAASTAAVAKGEEGVKVDRPEGYEPPVLETV). Residues 239–248 (GGAASTAAVA) are compositionally biased toward low complexity. Residues 249-261 (KGEEGVKVDRPEG) are compositionally biased toward basic and acidic residues.

The protein belongs to the eukaryotic ribosomal protein eS1 family. In terms of assembly, component of the small ribosomal subunit. Mature ribosomes consist of a small (40S) and a large (60S) subunit. The 40S subunit contains about 33 different proteins and 1 molecule of RNA (18S). The 60S subunit contains about 49 different proteins and 3 molecules of RNA (28S, 5.8S and 5S).

The protein resides in the cytoplasm. In Ixodes scapularis (Black-legged tick), this protein is Small ribosomal subunit protein eS1.